Reading from the N-terminus, the 317-residue chain is Methionyl-tRNA formyltransferase (317 aa).

110–113 (SLLP) serves as a coordination point for (6S)-5,6,7,8-tetrahydrofolate.

This sequence belongs to the Fmt family.

It carries out the reaction L-methionyl-tRNA(fMet) + (6R)-10-formyltetrahydrofolate = N-formyl-L-methionyl-tRNA(fMet) + (6S)-5,6,7,8-tetrahydrofolate + H(+). Its function is as follows. Attaches a formyl group to the free amino group of methionyl-tRNA(fMet). The formyl group appears to play a dual role in the initiator identity of N-formylmethionyl-tRNA by promoting its recognition by IF2 and preventing the misappropriation of this tRNA by the elongation apparatus. In Lactiplantibacillus plantarum (strain ATCC BAA-793 / NCIMB 8826 / WCFS1) (Lactobacillus plantarum), this protein is Methionyl-tRNA formyltransferase.